The following is a 346-amino-acid chain: Free fatty acid receptor 3 (346 aa).

Residues 1–19 (MDTGPDQSYFSGNHWFVFS) lie on the Extracellular side of the membrane. Residues 20–40 (VYLLTFLVGLPLNLLALVVFV) form a helical membrane-spanning segment. Residues 41 to 47 (GKLQRRP) are Cytoplasmic-facing. A helical membrane pass occupies residues 48–68 (VAVDVLLLNLTASDLLLLLFL). Over 69-88 (PFRMVEAANGMHWPLPFILC) the chain is Extracellular. Residues Cys88 and Cys169 are joined by a disulfide bond. A helical membrane pass occupies residues 89-111 (PLSGFIFFTTIYLTALFLAAVSI). Residues 112-132 (ERFLSVAHPLWYKTRPRLGQA) are Cytoplasmic-facing. Residues 133-153 (GLVSVACWLLASAHCSVVYVI) form a helical membrane-spanning segment. At 154 to 178 (EFSGDISHSQGTNGTCYLEFRKDQL) the chain is on the extracellular side. An N-linked (GlcNAc...) asparagine glycan is attached at Asn166. A helical membrane pass occupies residues 179–199 (AILLPVRLEMAVVLFVVPLII). Over 200–222 (TSYCYSRLVWILGRGGSHRRQRR) the chain is Cytoplasmic. Residues 223-243 (VAGLLAATLLNFLVCFGPYNV) form a helical membrane-spanning segment. Residues 244 to 258 (SHVVGYICGESPAWR) lie on the Extracellular side of the membrane. Residues 259–279 (IYVTLLSTLNSCVDPFVYYFS) form a helical membrane-spanning segment. Residues 280–346 (SSGFQADFHE…TGGQVACAES (67 aa)) are Cytoplasmic-facing. A compositionally biased stretch (basic and acidic residues) spans 307–330 (MELKEQKGGEEQRADRPAERKTSE). Residues 307–346 (MELKEQKGGEEQRADRPAERKTSEHSQGCGTGGQVACAES) form a disordered region.

The protein belongs to the G-protein coupled receptor 1 family. As to expression, highest level in adipose tissue, and lower expression across all tissues tested. Expressed in sympathetic ganglia.

The protein resides in the cell membrane. Functionally, g protein-coupled receptor that is activated by a major product of dietary fiber digestion, the short chain fatty acids (SCFAs), and that plays a role in the regulation of whole-body energy homeostasis and in intestinal immunity. In omnivorous mammals, the short chain fatty acids acetate, propionate and butyrate are produced primarily by the gut microbiome that metabolizes dietary fibers. SCFAs serve as a source of energy but also act as signaling molecules. That G protein-coupled receptor is probably coupled to the pertussis toxin-sensitive, G(i/o)-alpha family of G proteins. Its activation results in the formation of inositol 1,4,5-trisphosphate, the mobilization of intracellular calcium, the phosphorylation of the MAPK3/ERK1 and MAPK1/ERK2 kinases and the inhibition of intracellular cAMP accumulation. Activated by SCFAs and by beta-hydroxybutyrate, a ketone body produced by the liver upon starvation, it inhibits N-type calcium channels and modulates the activity of sympathetic neurons through a signaling cascade involving the beta and gamma subunits of its coupled G protein, phospholipase C and MAP kinases. Thereby, it may regulate energy expenditure through the control of the sympathetic nervous system that controls for instance heart rate. Upon activation by SCFAs accumulating in the intestine, it may also signal to the brain via neural circuits which in turn would regulate intestinal gluconeogenesis. May also control the production of hormones involved in whole-body energy homeostasis. May for instance, regulate blood pressure through renin secretion. May also regulate secretion of the PYY peptide by enteroendocrine cells and control gut motility, intestinal transit rate, and the harvesting of energy from SCFAs produced by gut microbiota. May also indirectly regulate the production of LEP/Leptin, a hormone acting on the CNS to inhibit food intake, in response to the presence of short-chain fatty acids in the intestine. Finally, may also play a role in glucose homeostasis. Besides its role in energy homeostasis, may play a role in intestinal immunity. May mediate the activation of the inflammatory and immune response by SCFAs in the gut, regulating the rapid production of chemokines and cytokines by intestinal epithelial cells. Among SCFAs, the fatty acids containing less than 6 carbons, the most potent activators are probably propionate, butyrate and pentanoate while acetate is a poor activator. In Homo sapiens (Human), this protein is Free fatty acid receptor 3 (FFAR3).